The chain runs to 529 residues: ATP synthase subunit alpha (529 aa).

173–180 (GDRQTGKT) contacts ATP.

It belongs to the ATPase alpha/beta chains family. As to quaternary structure, F-type ATPases have 2 components, CF(1) - the catalytic core - and CF(0) - the membrane proton channel. CF(1) has five subunits: alpha(3), beta(3), gamma(1), delta(1), epsilon(1). CF(0) has three main subunits: a(1), b(2) and c(9-12). The alpha and beta chains form an alternating ring which encloses part of the gamma chain. CF(1) is attached to CF(0) by a central stalk formed by the gamma and epsilon chains, while a peripheral stalk is formed by the delta and b chains.

Its subcellular location is the cell membrane. It carries out the reaction ATP + H2O + 4 H(+)(in) = ADP + phosphate + 5 H(+)(out). Its function is as follows. Produces ATP from ADP in the presence of a proton gradient across the membrane. The alpha chain is a regulatory subunit. This is ATP synthase subunit alpha from Streptomyces lividans.